We begin with the raw amino-acid sequence, 315 residues long: Deoxyribonuclease-1-like 1 (315 aa).

A signal peptide spans M1–A29. Catalysis depends on residues E108 and H159. The cysteines at positions 198 and 235 are disulfide-linked. N-linked (GlcNAc...) asparagine glycosylation is present at N272.

It belongs to the DNase I family.

The protein resides in the endoplasmic reticulum. In Sus scrofa (Pig), this protein is Deoxyribonuclease-1-like 1 (DNASE1L1).